A 618-amino-acid chain; its full sequence is Manganese lipoxygenase (618 aa).

Positions 1–16 (MRSRILAIVFAARHVA) are cleaved as a signal peptide. The segment covering 36 to 45 (SSTTVLPSPT) has biased composition (low complexity). The disordered stretch occupies residues 36–58 (SSTTVLPSPTQYTLPNNDPNQGA). Over residues 46 to 58 (QYTLPNNDPNQGA) the composition is skewed to polar residues. The Lipoxygenase domain occupies 47-618 (YTLPNNDPNQ…PAVNPFFLSV (572 aa)). Asn60, Asn91, Asn106, Asn116, and Asn157 each carry an N-linked (GlcNAc...) asparagine glycan. Residues His290, His294, His478, and Asn482 each coordinate Mn(2+). Residue Asn513 is glycosylated (N-linked (GlcNAc...) asparagine). Residue Val618 participates in Mn(2+) binding.

This sequence belongs to the lipoxygenase family. Manganese lipoxygenase subfamily. It depends on Mn(2+) as a cofactor. In terms of processing, N- and O-glycosylated.

The protein localises to the secreted. It carries out the reaction (9Z,12Z)-octadecadienoate + O2 = (11S)-hydroperoxy-(9Z,12Z)-octadecadienoate. The enzyme catalyses (9Z,12Z)-octadecadienoate + O2 = (13R)-hydroperoxy-(9Z,11E)-octadecadienoate. It catalyses the reaction (9Z,12Z,15Z)-octadecatrienoate + O2 = (11S)-hydroperoxy-(9Z,12Z,15Z)-octadecatrienoate. The catalysed reaction is (9Z,12Z,15Z)-octadecatrienoate + O2 = (13R)-hydroperoxy-(9Z,11E,15Z)-octadecatrienoate. Lipoxygenase that metabolizes linoleic and alpha-linolenic acids to 11S- and 13R-hydroperoxy fatty acids. At the end of lipoxygenation, the intermediate product 11S-HPODE from linoleic acid is then transformed into 13R-HPODE as the final product. It also acts on alpha-linolenic acid producing 11S-HPOTrE and 13R-HPOTrE with subsequent transformation of 11S-HPOTrE to 13R-HPOTrE as final product. This Gaeumannomyces avenae (Oat take-all root rot fungus) protein is Manganese lipoxygenase.